A 422-amino-acid chain; its full sequence is La-related protein 6A (422 aa).

Residues 1–94 (MSSLPLRSGE…DHGENPVETD (94 aa)) form a disordered region. Over residues 48-61 (VTESSDDVVVNVSE) the composition is skewed to low complexity. Residues 73 to 89 (DHERNSGEDRDQDHGEN) show a composition bias toward basic and acidic residues. The region spanning 97–188 (VVPIDELNQK…KRLSPLPEIR (92 aa)) is the HTH La-type RNA-binding domain. Positions 193–283 (FTVLVENLPE…NGLRVKLLEQ (91 aa)) constitute an RRM domain. The tract at residues 286–422 (GKFAQRRPAR…PTSTQTSHEV (137 aa)) is disordered. Basic and acidic residues predominate over residues 295-348 (RREVDKEKDTTGRVHDQTGGEKNKKTREHQNHRLHHSDNPADDDGGNHQKDKNG).

It localises to the nucleus. Transcriptional regulator. The polypeptide is La-related protein 6A (LARP6A) (Arabidopsis thaliana (Mouse-ear cress)).